A 175-amino-acid chain; its full sequence is Coagulogen (175 aa).

8 disulfide bridges follow: C8/C167, C10/C95, C60/C161, C65/C121, C75/C168, C88/C140, C127/C170, and C134/C172.

The protein belongs to the coagulin family. In terms of assembly, coagulogen is cleaved after Arg-18 and Arg-46 by a clotting enzyme contained in the hemocyte and activated by a bacterial endotoxin (lipopolysaccharide). This cleavage releases the peptide C and leaves 2 chains of coagulin, A and B, linked by two disulfide bonds. Coagulin molecules interlink to form a gel. Hemolymph.

It localises to the secreted. Its function is as follows. Coagulogen is a gel-forming protein of hemolymph; it hinders the spread of invaders by immobilizing them. This chain is Coagulogen, found in Tachypleus gigas (Southeast Asian horseshoe crab).